A 285-amino-acid polypeptide reads, in one-letter code: 2-dehydro-3-deoxyphosphooctonate aldolase (285 aa).

The protein belongs to the KdsA family.

It is found in the cytoplasm. It catalyses the reaction D-arabinose 5-phosphate + phosphoenolpyruvate + H2O = 3-deoxy-alpha-D-manno-2-octulosonate-8-phosphate + phosphate. Its pathway is carbohydrate biosynthesis; 3-deoxy-D-manno-octulosonate biosynthesis; 3-deoxy-D-manno-octulosonate from D-ribulose 5-phosphate: step 2/3. The protein operates within bacterial outer membrane biogenesis; lipopolysaccharide biosynthesis. The polypeptide is 2-dehydro-3-deoxyphosphooctonate aldolase (Polaromonas naphthalenivorans (strain CJ2)).